Here is a 246-residue protein sequence, read N- to C-terminus: MQLKTSIGLITCRMNTQSNQIETILVQKRYSLAFSEFIHCHYSINSNHSHLIKMFNNMTINERLLIKTLDFDRMWYHIWIETPVYELYHKKYQKFKKNWLIPDNGKKLISLINQAKGSGTLLWEIPKGKPKENESDLACAIREFEEETGIAREDYQILPAFKKSMSYFEGKTEYKHIYFLAVLCKSLEEPNMNLSLQYETRIAEISKISWQNMEAVRFISKHQSLNLEPIIGPAFNFIKNYLRYKH.

Residues 91 to 239 (KYQKFKKNWL…IIGPAFNFIK (149 aa)) enclose the Nudix hydrolase domain. The Nudix box signature appears at 128–149 (GKPKENESDLACAIREFEEETG). A Mg(2+)-binding site is contributed by E134. Catalysis depends on E143, which acts as the Nucleophile. E147 and E169 together coordinate Mg(2+).

It belongs to the Nudix hydrolase family. DIPP subfamily. In terms of assembly, interacts with host RPL23A. Mg(2+) serves as cofactor. It depends on Mn(2+) as a cofactor.

The protein localises to the host rough endoplasmic reticulum. The enzyme catalyses diphospho-myo-inositol polyphosphate + H2O = myo-inositol polyphosphate + phosphate.. Its function is as follows. Decapping enzyme required for the removal of the 5'-end m7GpppN cap tethered to viral and host mRNAs to allow their decay in cells. May therefore accelerate viral and cellular mRNA turnover to eliminate competing host mRNAs and allow stage-specific synthesis of viral proteins. Acceleration of the turnover of cellular transcripts may even promote the shutoff of host protein synthesis. In addition to the mRNA cap, g5R also efficiently hydrolyzes diphosphoinositol polyphosphates. Down-regulation of the level of PP-InsP5 (diphosphoinositol pentakisphosphate) may play a role in viral manipulation of the cellular secretory pathway, a step necessary for the formation of virions. Binds viral and cellular poly(A) mRNAs, thereby decreasing both types of mRNAs. The sequence is that of mRNA-decapping protein g5R from African swine fever virus (isolate Pig/Kenya/KEN-50/1950) (ASFV).